The primary structure comprises 449 residues: Tryptophan--tRNA ligase (449 aa).

Residues 10–12 and 18–19 each bind ATP; these read TTT and GN. A 'HIGH' region motif is present at residues 11 to 19; sequence TTGTPHLGN. Residue Asp143 coordinates L-tryptophan. ATP is bound by residues 155–157, Leu197, and 204–208; these read GRD and KMSKS. The 'KMSKS' region signature appears at 204–208; that stretch reads KMSKS.

The protein belongs to the class-I aminoacyl-tRNA synthetase family. In terms of assembly, homodimer.

It localises to the cytoplasm. The enzyme catalyses tRNA(Trp) + L-tryptophan + ATP = L-tryptophyl-tRNA(Trp) + AMP + diphosphate + H(+). Functionally, catalyzes the attachment of tryptophan to tRNA(Trp). This chain is Tryptophan--tRNA ligase, found in Pseudomonas putida (strain ATCC 47054 / DSM 6125 / CFBP 8728 / NCIMB 11950 / KT2440).